A 250-amino-acid polypeptide reads, in one-letter code: Small ribosomal subunit protein uS2 (250 aa).

This sequence belongs to the universal ribosomal protein uS2 family.

In Paracidovorax citrulli (strain AAC00-1) (Acidovorax citrulli), this protein is Small ribosomal subunit protein uS2.